Reading from the N-terminus, the 437-residue chain is Glutamate-1-semialdehyde 2,1-aminomutase (437 aa).

Lys-273 carries the post-translational modification N6-(pyridoxal phosphate)lysine.

Belongs to the class-III pyridoxal-phosphate-dependent aminotransferase family. HemL subfamily. As to quaternary structure, homodimer. Pyridoxal 5'-phosphate is required as a cofactor.

The protein localises to the cytoplasm. It carries out the reaction (S)-4-amino-5-oxopentanoate = 5-aminolevulinate. It functions in the pathway porphyrin-containing compound metabolism; protoporphyrin-IX biosynthesis; 5-aminolevulinate from L-glutamyl-tRNA(Glu): step 2/2. The sequence is that of Glutamate-1-semialdehyde 2,1-aminomutase from Chlamydia felis (strain Fe/C-56) (Chlamydophila felis).